The sequence spans 831 residues: MIPLDPAQRAAELRRRLQEANYHYHVLDQPRIPDADYDRMLRELDALEATYPDLATPDSPTQRVGHTIATAFSEVRHTVPMLSLNNAFSDPEVLEFVRRITARLGETAPGFSAEPKLDGLAISLRYQNGIFIQGATRGDGVTGEDVTANLRTLPTIPQRLQSDTWPTVLEVRGEVYMPRPDFEAYNTQARLRGWKVLANPRNGAAGSLRQLDPHITAQRPLSFYAYGIGEVTDDVAFHRHSEILASLRAWGFPVSPLVELVYGSEGLLNYYRRMETIRDTLPFDIDGIVYKLDDLSGQHEMGFVARAPRWAIAHKFPAQEQTTTVEAIEIQIGRTGAATPVARLTPVQVAGVTVTSVTLHNADQIARLDVRIGDTVIVRRAGDVIPEVVAVITDSRPPGATAWSMPMACPVCGSEIVRETGAAVWRCSGELACPAQRKEAIRHFVSRRAMDVEGLGVKCIELLVDAAVVHGVADLYHLSLDQLLRLRLVTNAQTPTMLLREARDHVTGMRYQQLEEILRTVGVDLSGEGDVPKHWQIDVLRAQWPDFDWNHKKIATKWAQNLIAAIDRSRQTTLERFLFALGMTHVGETTAKALAHSFGDLAIIRQLPWPLFKCVPDIGGEVARAIGHFMDQPANQQAIDDLVERGVRITDAHPPTSTLRDQLTLASLLEHLEIPKITPLRAVQLATLAPTLPLLAEADLDALLQAGVPQPAAQSLTEWFQSPDNISLARRLQHCCDVLLAQLLSPDRAHTAPLNGQSVVLTGKLASLTREAAATRLESLGAKIVGSVSKKTSFLVAGEDPGSKLDKAHALHVDIWDEARLLAFLEQYSAQ.

Residues 34–38 (DADYD), 83–84 (SL), and E114 each bind NAD(+). K116 acts as the N6-AMP-lysine intermediate in catalysis. NAD(+)-binding residues include R137, E174, K291, and K315. Positions 409, 412, 427, and 433 each coordinate Zn(2+). A BRCT domain is found at 749-831 (AHTAPLNGQS…LAFLEQYSAQ (83 aa)).

Belongs to the NAD-dependent DNA ligase family. LigA subfamily. It depends on Mg(2+) as a cofactor. Mn(2+) is required as a cofactor.

It catalyses the reaction NAD(+) + (deoxyribonucleotide)n-3'-hydroxyl + 5'-phospho-(deoxyribonucleotide)m = (deoxyribonucleotide)n+m + AMP + beta-nicotinamide D-nucleotide.. Its function is as follows. DNA ligase that catalyzes the formation of phosphodiester linkages between 5'-phosphoryl and 3'-hydroxyl groups in double-stranded DNA using NAD as a coenzyme and as the energy source for the reaction. It is essential for DNA replication and repair of damaged DNA. The protein is DNA ligase of Xylella fastidiosa (strain M23).